Reading from the N-terminus, the 492-residue chain is Protein adenylyltransferase Fic (492 aa).

Residues 1-17 (MCMEAEPPSPPAQQQEQ) are compositionally biased toward low complexity. Residues 1–21 (MCMEAEPPSPPAQQQEQVNPP) are disordered. A helical transmembrane segment spans residues 33 to 55 (LYRLVLLFVAGSLAAWTFHALSS). TPR repeat units follow at residues 118–151 (ALGA…APRH) and 152–186 (PEVL…SPSN). The Inhibitory (S/T)XXXE(G/N) motif signature appears at 243–248 (SVGIEG). ATP contacts are provided by residues Glu247 and 328 to 331 (VGGH). Residues 297 to 432 (ITIKDILELH…IRPFVRFIAD (136 aa)) form the Fido domain. Residue His375 is part of the active site. Residues 379-386 (DGNGRTSR), 411-412 (YY), and Asn419 contribute to the ATP site.

This sequence belongs to the fic family. Homodimer.

Its subcellular location is the membrane. The enzyme catalyses L-tyrosyl-[protein] + ATP = O-(5'-adenylyl)-L-tyrosyl-[protein] + diphosphate. It catalyses the reaction L-threonyl-[protein] + ATP = 3-O-(5'-adenylyl)-L-threonyl-[protein] + diphosphate. The catalysed reaction is 3-O-(5'-adenylyl)-L-threonyl-[protein] + H2O = L-threonyl-[protein] + AMP + H(+). With respect to regulation, the side chain of Glu-247 determines which of the two opposing activities (AMPylase or de-AMPylase) will take place. In response to endoplasmic reticulum stress, mediates de-AMPylase activity. Adenylyltransferase activity is inhibited by the inhibitory helix present at the N-terminus: Glu-247 binds ATP and competes with ATP-binding at Arg-386, thereby preventing adenylyltransferase activity. In unstressed cells, disengagement of Glu-247 promotes adenylyltransferase activity. Activation dissociates ATP-binding from Glu-247, allowing ordered binding of the entire ATP moiety with the alpha-phosphate in an orientation that is productive for accepting an incoming target hydroxyl side chain. Its function is as follows. Protein that can both mediate the addition of adenosine 5'-monophosphate (AMP) to specific residues of target proteins (AMPylation), and the removal of the same modification from target proteins (de-AMPylation), depending on the context. The side chain of Glu-247 determines which of the two opposing activities (AMPylase or de-AMPylase) will take place. Acts as a key regulator of the unfolded protein response (UPR) by mediating AMPylation or de-AMPylation of Hsc70-3/BiP. In unstressed cells, acts as an adenylyltransferase by mediating AMPylation of Hsc70-3/BiP at 'Thr-518', thereby inactivating it. In response to endoplasmic reticulum stress, acts as a phosphodiesterase by mediating removal of ATP (de-AMPylation) from Hsc70-3/BiP at 'Thr-518', leading to restore HSPA5/BiP activity. This is Protein adenylyltransferase Fic from Drosophila simulans (Fruit fly).